We begin with the raw amino-acid sequence, 660 residues long: PAN2-PAN3 deadenylation complex subunit PAN3 (660 aa).

A C3H1-type zinc finger spans residues 7-36; that stretch reads SAKDTFCKNVLIYGYCKYENKGCAFSHTVK. Disordered stretches follow at residues 36–60 and 150–186; these read KPTS…TNAD and SPVM…PTSA. Low complexity predominate over residues 43–59; the sequence is GSQGSNATTNSSGNTNA. The PABPC-interacting motif-2 (PAM-2) signature appears at 59–79; it reads ADMKKKFNFNTPSFQPSTVPN. Residues 150 to 159 show a composition bias toward polar residues; the sequence is SPVMAQSVST. A pseudokinase domain region spans residues 252–528; the sequence is QTLPRSNLPD…LQEFNRNHLS (277 aa). Residues Arg304, 358–365, and 415–416 contribute to the ATP site; these read DYFPNSNT and SK. Residues 529-567 adopt a coiled-coil conformation; the sequence is RRILNFCSNAQDSQDFMESQLSTELENARVFRLITKLNF. Positions 568-660 are knob domain; that stretch reads IIDRPEYDND…DSAFRTLTRG (93 aa).

It belongs to the protein kinase superfamily. PAN3 family. As to quaternary structure, homodimer. Forms a heterotrimer with a catalytic subunit PAN2 to form the poly(A)-nuclease (PAN) deadenylation complex. Interacts (via PAM-2 motif) with poly(A)-binding protein PAB1 (via PABC domain), conferring substrate specificity of the enzyme complex.

The protein resides in the cytoplasm. Its function is as follows. Regulatory subunit of the poly(A)-nuclease (PAN) deadenylation complex, one of two cytoplasmic mRNA deadenylases involved in mRNA turnover. PAN specifically shortens poly(A) tails of RNA and the activity is stimulated by poly(A)-binding protein PAB1. PAN deadenylation is followed by rapid degradation of the shortened mRNA tails by the CCR4-NOT complex. Deadenylated mRNAs are then degraded by two alternative mechanisms, namely exosome-mediated 3'-5' exonucleolytic degradation, or deadenylation-dependent mRNA decaping and subsequent 5'-3' exonucleolytic degradation by XRN1. May also be involved in post-transcriptional maturation of mRNA poly(A) tails. PAN3 acts as a positive regulator for PAN activity, recruiting the catalytic subunit PAN2 to mRNA via its interaction with RNA and with PAB1. This chain is PAN2-PAN3 deadenylation complex subunit PAN3, found in Debaryomyces hansenii (strain ATCC 36239 / CBS 767 / BCRC 21394 / JCM 1990 / NBRC 0083 / IGC 2968) (Yeast).